Reading from the N-terminus, the 552-residue chain is DNA ligase (552 aa).

Position 229 (E229) interacts with ATP. K231 acts as the N6-AMP-lysine intermediate in catalysis. R236 and E283 together coordinate ATP. The Mg(2+) site is built by E283 and E377. The ATP site is built by K382 and K397.

Belongs to the ATP-dependent DNA ligase family. Interacts with host TOP2A and TOP2B. Requires Mg(2+) as cofactor.

It is found in the host cytoplasm. It catalyses the reaction ATP + (deoxyribonucleotide)n-3'-hydroxyl + 5'-phospho-(deoxyribonucleotide)m = (deoxyribonucleotide)n+m + AMP + diphosphate.. DNA ligase that seals nicks in double-stranded DNA during DNA replication, DNA recombination and DNA repair. Recruits cellular topoisomerase II to sites of viral replication and assembly. The chain is DNA ligase (OPG180) from Homo sapiens (Human).